We begin with the raw amino-acid sequence, 357 residues long: N-acetyl-gamma-glutamyl-phosphate reductase (357 aa).

C160 is a catalytic residue.

The protein belongs to the NAGSA dehydrogenase family. Type 1 subfamily.

Its subcellular location is the cytoplasm. The enzyme catalyses N-acetyl-L-glutamate 5-semialdehyde + phosphate + NADP(+) = N-acetyl-L-glutamyl 5-phosphate + NADPH + H(+). The protein operates within amino-acid biosynthesis; L-arginine biosynthesis; N(2)-acetyl-L-ornithine from L-glutamate: step 3/4. Catalyzes the NADPH-dependent reduction of N-acetyl-5-glutamyl phosphate to yield N-acetyl-L-glutamate 5-semialdehyde. In Synechococcus sp. (strain CC9605), this protein is N-acetyl-gamma-glutamyl-phosphate reductase.